The chain runs to 1077 residues: Response regulator SSK1 (1077 aa).

In terms of domain architecture, Response regulatory spans 854–1000 (NVLIVEDNII…FLERKVMEWG (147 aa)). Aspartate 903 bears the 4-aspartylphosphate mark.

Belongs to the SSK1 family.

Its subcellular location is the cytoplasm. Its function is as follows. Two-domain response regulator protein in the two-component signal transduction system of the HOG1 pathway. Involved in multi-stress responses and is essential for conidiation, secondary metabolism, autophagy and endocyrosis. In addition, regulates mycelial growth, cell nucleus development, septum formation, and organelle development. Also regulates trap formation and thus plays a crucial role in pathogenicity. The chain is Response regulator SSK1 from Arthrobotrys oligospora (strain ATCC 24927 / CBS 115.81 / DSM 1491) (Nematode-trapping fungus).